Here is a 119-residue protein sequence, read N- to C-terminus: Large ribosomal subunit protein uL24 (119 aa).

This sequence belongs to the universal ribosomal protein uL24 family. As to quaternary structure, part of the 50S ribosomal subunit.

Its function is as follows. One of two assembly initiator proteins, it binds directly to the 5'-end of the 23S rRNA, where it nucleates assembly of the 50S subunit. Functionally, located at the polypeptide exit tunnel on the outside of the subunit. The polypeptide is Large ribosomal subunit protein uL24 (Methanococcus maripaludis (strain DSM 14266 / JCM 13030 / NBRC 101832 / S2 / LL)).